A 328-amino-acid chain; its full sequence is DNA-directed RNA polymerase subunit alpha (328 aa).

The segment at 1–231 is alpha N-terminal domain (alpha-NTD); it reads MIYQMQMPAK…EHVAFFADFS (231 aa). An alpha C-terminal domain (alpha-CTD) region spans residues 252–328; that stretch reads MRKLLNTKIE…MDITKYQMKG (77 aa).

The protein belongs to the RNA polymerase alpha chain family. As to quaternary structure, homodimer. The RNAP catalytic core consists of 2 alpha, 1 beta, 1 beta' and 1 omega subunit. When a sigma factor is associated with the core the holoenzyme is formed, which can initiate transcription.

It catalyses the reaction RNA(n) + a ribonucleoside 5'-triphosphate = RNA(n+1) + diphosphate. Its function is as follows. DNA-dependent RNA polymerase catalyzes the transcription of DNA into RNA using the four ribonucleoside triphosphates as substrates. The chain is DNA-directed RNA polymerase subunit alpha from Chlorobium phaeovibrioides (strain DSM 265 / 1930) (Prosthecochloris vibrioformis (strain DSM 265)).